The sequence spans 228 residues: Large ribosomal subunit protein uL3 (228 aa).

Residue Q151 is modified to N5-methylglutamine.

The protein belongs to the universal ribosomal protein uL3 family. In terms of assembly, part of the 50S ribosomal subunit. Forms a cluster with proteins L14 and L19. Post-translationally, methylated by PrmB.

One of the primary rRNA binding proteins, it binds directly near the 3'-end of the 23S rRNA, where it nucleates assembly of the 50S subunit. The polypeptide is Large ribosomal subunit protein uL3 (Rhizobium meliloti (strain 1021) (Ensifer meliloti)).